The primary structure comprises 1826 residues: 1,3-beta-glucan synthase component bgs3 (1826 aa).

The span at 34-43 (QSNDQYNNIQ) shows a compositional bias: polar residues. A disordered region spans residues 34 to 90 (QSNDQYNNIQHPAPSFANPFIHEQDDSYSDILEEEPDEDAYDSPERPSSTEEFISQD). Residues 59–75 (DSYSDILEEEPDEDAYD) are compositionally biased toward acidic residues. A run of 7 helical transmembrane segments spans residues 427-447 (IWIL…PTIY), 465-485 (WCAP…ALIL), 504-524 (LIFV…IFGF), 543-563 (FFFS…FLLG), 597-617 (AALW…FLTL), 637-657 (FMIG…LVYL), and 660-680 (LVLF…MFSI). Serine 885 carries the phosphoserine modification. The next 11 membrane-spanning stretches (helical) occupy residues 1272–1292 (VFIM…GAMY), 1329–1349 (IISI…HDLL), 1375–1397 (VTQN…YIAT), 1417–1437 (GSSI…TMTV), 1438–1458 (WTTH…CPFI), 1531–1551 (IFTE…AYTF), 1571–1591 (IWIM…ILLM), 1607–1627 (YGAV…VFTF), 1642–1662 (VLGC…VVVF), 1701–1721 (CKVV…CILF), and 1770–1790 (SLLF…PLVL).

Belongs to the glycosyltransferase 48 family. In terms of assembly, component of the 1,3-beta-glucan synthase (GS) complex, composed of at least the alternate catalytic subunits bgs1, bgs2, bgs3, and bgs4, and a regulatory subunit chr4.

The protein localises to the membrane. It carries out the reaction [(1-&gt;3)-beta-D-glucosyl](n) + UDP-alpha-D-glucose = [(1-&gt;3)-beta-D-glucosyl](n+1) + UDP + H(+). Its function is as follows. Alternate catalytic subunit of the 1,3-beta-glucan synthase (GS) complex. Synthesizes 1,3-beta-glucan, a major structural component of the yeast cell wall. Required for cell wall biosynthesis and cell elongation. The sequence is that of 1,3-beta-glucan synthase component bgs3 from Schizosaccharomyces pombe (strain 972 / ATCC 24843) (Fission yeast).